The following is a 236-amino-acid chain: Uridylate kinase (236 aa).

10-11 is a binding site for ATP; that stretch reads GS. Gly-44 is a binding site for UMP. Gly-45 and Arg-49 together coordinate ATP. UMP contacts are provided by residues Asp-66 and 114–120; that span reads ITPGQTT. The ATP site is built by Thr-140, Tyr-146, and Asp-149.

Belongs to the UMP kinase family. As to quaternary structure, homohexamer.

It localises to the cytoplasm. It carries out the reaction UMP + ATP = UDP + ADP. The protein operates within pyrimidine metabolism; CTP biosynthesis via de novo pathway; UDP from UMP (UMPK route): step 1/1. Inhibited by UTP. Its function is as follows. Catalyzes the reversible phosphorylation of UMP to UDP. The polypeptide is Uridylate kinase (Methanospirillum hungatei JF-1 (strain ATCC 27890 / DSM 864 / NBRC 100397 / JF-1)).